We begin with the raw amino-acid sequence, 341 residues long: UDP-3-O-acylglucosamine N-acyltransferase (341 aa).

Residue H241 is the Proton acceptor of the active site.

The protein belongs to the transferase hexapeptide repeat family. LpxD subfamily. In terms of assembly, homotrimer.

It catalyses the reaction a UDP-3-O-[(3R)-3-hydroxyacyl]-alpha-D-glucosamine + a (3R)-hydroxyacyl-[ACP] = a UDP-2-N,3-O-bis[(3R)-3-hydroxyacyl]-alpha-D-glucosamine + holo-[ACP] + H(+). The protein operates within bacterial outer membrane biogenesis; LPS lipid A biosynthesis. In terms of biological role, catalyzes the N-acylation of UDP-3-O-acylglucosamine using 3-hydroxyacyl-ACP as the acyl donor. Is involved in the biosynthesis of lipid A, a phosphorylated glycolipid that anchors the lipopolysaccharide to the outer membrane of the cell. The polypeptide is UDP-3-O-acylglucosamine N-acyltransferase (Saccharophagus degradans (strain 2-40 / ATCC 43961 / DSM 17024)).